The chain runs to 638 residues: Phosphomethylpyrimidine synthase (638 aa).

Substrate-binding positions include asparagine 243, methionine 272, tyrosine 301, histidine 337, serine 357–glycine 359, aspartate 398–arginine 401, and glutamate 437. Position 441 (histidine 441) interacts with Zn(2+). Substrate is bound at residue tyrosine 464. Histidine 505 is a Zn(2+) binding site. 3 residues coordinate [4Fe-4S] cluster: cysteine 585, cysteine 588, and cysteine 593.

This sequence belongs to the ThiC family. As to quaternary structure, homodimer. The cofactor is [4Fe-4S] cluster.

The catalysed reaction is 5-amino-1-(5-phospho-beta-D-ribosyl)imidazole + S-adenosyl-L-methionine = 4-amino-2-methyl-5-(phosphooxymethyl)pyrimidine + CO + 5'-deoxyadenosine + formate + L-methionine + 3 H(+). The protein operates within cofactor biosynthesis; thiamine diphosphate biosynthesis. Functionally, catalyzes the synthesis of the hydroxymethylpyrimidine phosphate (HMP-P) moiety of thiamine from aminoimidazole ribotide (AIR) in a radical S-adenosyl-L-methionine (SAM)-dependent reaction. The sequence is that of Phosphomethylpyrimidine synthase from Dechloromonas aromatica (strain RCB).